The sequence spans 23 residues: Fimbrial protein (23 aa).

Cysteines 8 and 21 form a disulfide.

Belongs to the N-Me-Phe pilin family. As to quaternary structure, the pili are polar flexible filaments of about 5.4 nanometers diameter and 2.5 micrometers average length; they consist of only a single polypeptide chain arranged in a helical configuration of five subunits per turn in the assembled pilus.

The protein resides in the fimbrium. The sequence is that of Fimbrial protein (pil) from Pseudomonas aeruginosa.